Consider the following 294-residue polypeptide: 4-hydroxy-tetrahydrodipicolinate synthase (294 aa).

Threonine 47 is a pyruvate binding site. Residue tyrosine 136 is the Proton donor/acceptor of the active site. The Schiff-base intermediate with substrate role is filled by lysine 164. Valine 206 contacts pyruvate.

Belongs to the DapA family. As to quaternary structure, homotetramer; dimer of dimers.

It is found in the cytoplasm. It catalyses the reaction L-aspartate 4-semialdehyde + pyruvate = (2S,4S)-4-hydroxy-2,3,4,5-tetrahydrodipicolinate + H2O + H(+). It participates in amino-acid biosynthesis; L-lysine biosynthesis via DAP pathway; (S)-tetrahydrodipicolinate from L-aspartate: step 3/4. In terms of biological role, catalyzes the condensation of (S)-aspartate-beta-semialdehyde [(S)-ASA] and pyruvate to 4-hydroxy-tetrahydrodipicolinate (HTPA). This Nostoc sp. (strain PCC 7120 / SAG 25.82 / UTEX 2576) protein is 4-hydroxy-tetrahydrodipicolinate synthase.